A 34-amino-acid polypeptide reads, in one-letter code: Peptide 9797 (34 aa).

Expressed by the venom gland.

Its subcellular location is the secreted. The chain is Peptide 9797 from Tityus stigmurus (Brazilian scorpion).